The chain runs to 251 residues: tRNA (guanine-N(1)-)-methyltransferase (251 aa).

S-adenosyl-L-methionine contacts are provided by residues Gly113 and 133–138 (MGDYVL).

This sequence belongs to the RNA methyltransferase TrmD family. As to quaternary structure, homodimer.

Its subcellular location is the cytoplasm. The enzyme catalyses guanosine(37) in tRNA + S-adenosyl-L-methionine = N(1)-methylguanosine(37) in tRNA + S-adenosyl-L-homocysteine + H(+). In terms of biological role, specifically methylates guanosine-37 in various tRNAs. This chain is tRNA (guanine-N(1)-)-methyltransferase, found in Sodalis glossinidius (strain morsitans).